The chain runs to 345 residues: MMRVRPVERRDLADILELAGKTGVGMTSLPQNEQHLAARIERALNTWQGSLAVGEQGYLFVLEDTEREKVVGVSAIEVAVGMNDPWYNFRVGTLVHASKTLNVYKSVPTLFLSNDHTGYSELCTLFLDPEYRKDKNGPFLSKVRFLFIAAFRQHFSRKLIAEMRGYTDEQGRSPFWENVGRHFFSIEFAKADYLSGTGQKAFIAELMPKHPLYVDFLAEEARAVIGQVHPHTAPARAVLETEGLQYQGYVDIFDGGPTLEANTDEVRAVRDSSQRKVVIDDIDIDPSGSAYLVANDRYQEFRSILINTHLSDEFLHLTPDNAAALGVVAGDVVRIISLFAPETKK.

Position 125 (leucine 125) interacts with succinyl-CoA. The Proton donor role is filled by histidine 229.

Belongs to the arginine N-succinyltransferase family.

It carries out the reaction succinyl-CoA + L-arginine = N(2)-succinyl-L-arginine + CoA + H(+). It functions in the pathway amino-acid degradation; L-arginine degradation via AST pathway; L-glutamate and succinate from L-arginine: step 1/5. Catalyzes the transfer of succinyl-CoA to arginine to produce N(2)-succinylarginine. In Yersinia enterocolitica serotype O:8 / biotype 1B (strain NCTC 13174 / 8081), this protein is Arginine N-succinyltransferase.